The primary structure comprises 312 residues: DNA-directed RNA polymerase subunit alpha (312 aa).

Positions 1 to 226 are alpha N-terminal domain (alpha-NTD); the sequence is MIEFEKPIIT…EHLNLFTDLT (226 aa). The alpha C-terminal domain (alpha-CTD) stretch occupies residues 243–312; the sequence is DEKVLDRTIE…DLGLGLKNDK (70 aa).

The protein belongs to the RNA polymerase alpha chain family. In terms of assembly, homodimer. The RNAP catalytic core consists of 2 alpha, 1 beta, 1 beta' and 1 omega subunit. When a sigma factor is associated with the core the holoenzyme is formed, which can initiate transcription.

The enzyme catalyses RNA(n) + a ribonucleoside 5'-triphosphate = RNA(n+1) + diphosphate. Its function is as follows. DNA-dependent RNA polymerase catalyzes the transcription of DNA into RNA using the four ribonucleoside triphosphates as substrates. This is DNA-directed RNA polymerase subunit alpha from Streptococcus agalactiae serotype III (strain NEM316).